A 456-amino-acid polypeptide reads, in one-letter code: L-2-hydroxyglutarate dehydrogenase, mitochondrial (456 aa).

The transit peptide at 1-20 directs the protein to the mitochondrion; it reads MLKTSFLLSKRNAVSLSRVL.

The protein belongs to the L2HGDH family. It depends on FAD as a cofactor.

The protein localises to the mitochondrion. The catalysed reaction is (S)-2-hydroxyglutarate + A = 2-oxoglutarate + AH2. The protein is L-2-hydroxyglutarate dehydrogenase, mitochondrial of Nematostella vectensis (Starlet sea anemone).